The following is a 127-amino-acid chain: Protein ApaG (127 aa).

The 125-residue stretch at 3–127 (DADVYAISVE…FVLAIPRTLH (125 aa)) folds into the ApaG domain.

The polypeptide is Protein ApaG (Stenotrophomonas maltophilia (strain K279a)).